The following is a 517-amino-acid chain: Pentatricopeptide repeat-containing protein At5g42450, mitochondrial (517 aa).

The N-terminal 23 residues, 1–23 (MLHMILSQRVILLRKYHSSANAL), are a transit peptide targeting the mitochondrion. PPR repeat units lie at residues 57-91 (DVIS…GIRP), 92-126 (NEFT…GLAS), 127-157 (NVFV…TRDP), 158-188 (NVVS…MPER), 189-223 (SVVT…GVVI), 225-259 (NEST…LGKR), 261-291 (NVFV…LEEE), 294-329 (NIVS…NLRP), and 368-398 (ELEH…MPLD). The interval 403 to 478 (FWKALLGGCQ…FTGCSWIEVR (76 aa)) is type E motif. The type E(+) motif stretch occupies residues 479–509 (DQIRVFVNADKNNELKDEVYRMLALVSQHLE).

Belongs to the PPR family. PCMP-E subfamily.

It is found in the mitochondrion. This chain is Pentatricopeptide repeat-containing protein At5g42450, mitochondrial (PCMP-E102), found in Arabidopsis thaliana (Mouse-ear cress).